The chain runs to 266 residues: UPF0246 protein PHZ_c0561 (266 aa).

The interval 245 to 266 is disordered; the sequence is DEEFTFARPQPPPPAASRNKED.

It belongs to the UPF0246 family.

This chain is UPF0246 protein PHZ_c0561, found in Phenylobacterium zucineum (strain HLK1).